A 93-amino-acid chain; its full sequence is MNRSELVAALADRAEVTRKDADAVLAAFAEVVGDIVSKGDEKVTIPGFLTFERTHRAARTARNPQTGEPIQIPAGYSVKVSAGSKLKEAAKGK.

It belongs to the bacterial histone-like protein family. In terms of assembly, homodimer.

The protein localises to the cytoplasm. The protein resides in the nucleoid. Histone-like DNA-binding protein which is capable of wrapping DNA to stabilize it, and thus to prevent its denaturation under extreme environmental conditions. In Streptomyces coelicolor (strain ATCC BAA-471 / A3(2) / M145), this protein is DNA-binding protein HU 1 (hup1).